The sequence spans 750 residues: Methylmalonyl-CoA mutase, mitochondrial (750 aa).

A mitochondrion-targeting transit peptide spans 1–32 (MLRAKNQLFLLSPHYLKQVKESSGSRLIQQRL). Gln50 is a malonyl-CoA binding site. Position 89 is an N6-acetyllysine (Lys89). Residues 96–99 (YPTM) and 106–110 (TIRQY) each bind malonyl-CoA. Lys212 carries the N6-acetyllysine modification. Malonyl-CoA is bound by residues 216–218 (TIQ), Arg228, Lys255, His265, and 304–306 (RLS). Lys335 is modified (N6-acetyllysine). Lys343 carries the post-translational modification N6-succinyllysine. A Phosphoserine modification is found at Ser481. Lys595 carries the N6-succinyllysine modification. At Lys602 the chain carries N6-acetyllysine. In terms of domain architecture, B12-binding spans 614-746 (RPRLLVAKMG…DDIEKCLEKK (133 aa)). Residue His627 coordinates adenosylcob(III)alamin.

Belongs to the methylmalonyl-CoA mutase family. As to quaternary structure, homodimer. Interacts (the apoenzyme form) with MMAA; the interaction is GTP dependent. It depends on adenosylcob(III)alamin as a cofactor.

The protein resides in the mitochondrion matrix. It is found in the mitochondrion. Its subcellular location is the cytoplasm. The catalysed reaction is (R)-methylmalonyl-CoA = succinyl-CoA. With respect to regulation, inhibited by itaconyl-CoA, a metabolite that inactivates the coenzyme B12 cofactor. Functionally, catalyzes the reversible isomerization of methylmalonyl-CoA (MMCoA) (generated from branched-chain amino acid metabolism and degradation of dietary odd chain fatty acids and cholesterol) to succinyl-CoA (3-carboxypropionyl-CoA), a key intermediate of the tricarboxylic acid cycle. The sequence is that of Methylmalonyl-CoA mutase, mitochondrial (MMUT) from Pongo abelii (Sumatran orangutan).